Reading from the N-terminus, the 92-residue chain is Small ribosomal subunit protein uS19c (92 aa).

The protein belongs to the universal ribosomal protein uS19 family.

The protein resides in the plastid. Its subcellular location is the chloroplast. Protein S19 forms a complex with S13 that binds strongly to the 16S ribosomal RNA. This chain is Small ribosomal subunit protein uS19c, found in Calycanthus floridus var. glaucus (Eastern sweetshrub).